A 137-amino-acid chain; its full sequence is Basic phospholipase A2 beta-bungarotoxin A1 chain (137 aa).

An N-terminal signal peptide occupies residues 1–9 (AVCVSLLGA). Positions 10 to 17 (ANIPPHPL) are excised as a propeptide. 6 cysteine pairs are disulfide-bonded: Cys44/Cys136, Cys46/Cys62, Cys61/Cys117, Cys68/Cys110, Cys78/Cys103, and Cys96/Cys108. Ca(2+)-binding residues include Tyr45, Gly47, and Gly49. The active site involves His65. Asp66 is a Ca(2+) binding site. Asp111 is a catalytic residue.

Belongs to the phospholipase A2 family. Group I subfamily. D49 sub-subfamily. In terms of assembly, heterodimer; disulfide-linked. The A chain has phospholipase A2 activity and the B chain shows homology with the basic protease inhibitors. Ca(2+) serves as cofactor. As to expression, expressed by the venom gland.

The protein localises to the secreted. The catalysed reaction is a 1,2-diacyl-sn-glycero-3-phosphocholine + H2O = a 1-acyl-sn-glycero-3-phosphocholine + a fatty acid + H(+). Snake venom phospholipase A2 (PLA2) that shows presynaptic neurotoxicity. The A chain has phospholipase activity. PLA2 catalyzes the calcium-dependent hydrolysis of the 2-acyl groups in 3-sn-phosphoglycerides. This chain is Basic phospholipase A2 beta-bungarotoxin A1 chain, found in Bungarus candidus (Malayan krait).